We begin with the raw amino-acid sequence, 463 residues long: Elongation factor 1-alpha (463 aa).

The 238-residue stretch at 8-245 (KTHLNIVIIG…DALVPPVRPA (238 aa)) folds into the tr-type G domain. Positions 17–24 (GHVDSGKS) are G1. 17-24 (GHVDSGKS) is a GTP binding site. Residues 73-77 (GITID) are G2. Positions 94 to 97 (DAPG) are G3. Residues 94–98 (DAPGH) and 156–159 (NKMD) contribute to the GTP site. The tract at residues 156–159 (NKMD) is G4. Residues 197-199 (SGW) form a G5 region.

The protein belongs to the TRAFAC class translation factor GTPase superfamily. Classic translation factor GTPase family. EF-Tu/EF-1A subfamily. In terms of assembly, the 42S RNP particle comprises four subunits each of which contains one molecule of 5S RNA, three molecules of tRNA, two molecules of EF1-alpha and one molecule of the 5S RNA binding protein 43.

The protein localises to the cytoplasm. Its function is as follows. This protein is one of two protein components of a 42S RNP particle that is very abundant in previtellogenic oocytes. A major function served by 42sp50 appears to be the storage of tRNAs for later use in oogenesis and early embryogenesis. Purified 42S particles can directly transfer aminoacyl tRNA to ribosomes. This chain is Elongation factor 1-alpha, found in Xenopus laevis (African clawed frog).